The sequence spans 371 residues: 4-hydroxy-3-methylbut-2-en-1-yl diphosphate synthase (flavodoxin) (371 aa).

[4Fe-4S] cluster contacts are provided by Cys-269, Cys-272, Cys-304, and Glu-311.

The protein belongs to the IspG family. It depends on [4Fe-4S] cluster as a cofactor.

The enzyme catalyses (2E)-4-hydroxy-3-methylbut-2-enyl diphosphate + oxidized [flavodoxin] + H2O + 2 H(+) = 2-C-methyl-D-erythritol 2,4-cyclic diphosphate + reduced [flavodoxin]. Its pathway is isoprenoid biosynthesis; isopentenyl diphosphate biosynthesis via DXP pathway; isopentenyl diphosphate from 1-deoxy-D-xylulose 5-phosphate: step 5/6. Functionally, converts 2C-methyl-D-erythritol 2,4-cyclodiphosphate (ME-2,4cPP) into 1-hydroxy-2-methyl-2-(E)-butenyl 4-diphosphate. The chain is 4-hydroxy-3-methylbut-2-en-1-yl diphosphate synthase (flavodoxin) from Acinetobacter baumannii (strain AB307-0294).